The following is a 329-amino-acid chain: Lipoyl synthase (329 aa).

The interval 1 to 23 (MTDLTATPAPAEPAASAYDPTAK) is disordered. 7 residues coordinate [4Fe-4S] cluster: Cys76, Cys81, Cys87, Cys102, Cys106, Cys109, and Ser316. A Radical SAM core domain is found at 87 to 305 (CFGKGTATFM…EEEAYKMGFT (219 aa)).

This sequence belongs to the radical SAM superfamily. Lipoyl synthase family. [4Fe-4S] cluster is required as a cofactor.

Its subcellular location is the cytoplasm. It catalyses the reaction [[Fe-S] cluster scaffold protein carrying a second [4Fe-4S](2+) cluster] + N(6)-octanoyl-L-lysyl-[protein] + 2 oxidized [2Fe-2S]-[ferredoxin] + 2 S-adenosyl-L-methionine + 4 H(+) = [[Fe-S] cluster scaffold protein] + N(6)-[(R)-dihydrolipoyl]-L-lysyl-[protein] + 4 Fe(3+) + 2 hydrogen sulfide + 2 5'-deoxyadenosine + 2 L-methionine + 2 reduced [2Fe-2S]-[ferredoxin]. Its pathway is protein modification; protein lipoylation via endogenous pathway; protein N(6)-(lipoyl)lysine from octanoyl-[acyl-carrier-protein]: step 2/2. Functionally, catalyzes the radical-mediated insertion of two sulfur atoms into the C-6 and C-8 positions of the octanoyl moiety bound to the lipoyl domains of lipoate-dependent enzymes, thereby converting the octanoylated domains into lipoylated derivatives. This chain is Lipoyl synthase, found in Burkholderia mallei (strain NCTC 10247).